Consider the following 707-residue polypeptide: tRNA 5-methylaminomethyl-2-thiouridine biosynthesis bifunctional protein MnmC (707 aa).

A tRNA (mnm(5)s(2)U34)-methyltransferase region spans residues 1–264 (MTKKLEHEYI…KREMLFGTFE (264 aa)). The FAD-dependent cmnm(5)s(2)U34 oxidoreductase stretch occupies residues 312 to 707 (IGGGLAGAHA…LFRDLTRNRI (396 aa)).

This sequence in the N-terminal section; belongs to the methyltransferase superfamily. tRNA (mnm(5)s(2)U34)-methyltransferase family. It in the C-terminal section; belongs to the DAO family. The cofactor is FAD.

Its subcellular location is the cytoplasm. It carries out the reaction 5-aminomethyl-2-thiouridine(34) in tRNA + S-adenosyl-L-methionine = 5-methylaminomethyl-2-thiouridine(34) in tRNA + S-adenosyl-L-homocysteine + H(+). Catalyzes the last two steps in the biosynthesis of 5-methylaminomethyl-2-thiouridine (mnm(5)s(2)U) at the wobble position (U34) in tRNA. Catalyzes the FAD-dependent demodification of cmnm(5)s(2)U34 to nm(5)s(2)U34, followed by the transfer of a methyl group from S-adenosyl-L-methionine to nm(5)s(2)U34, to form mnm(5)s(2)U34. The sequence is that of tRNA 5-methylaminomethyl-2-thiouridine biosynthesis bifunctional protein MnmC from Saccharophagus degradans (strain 2-40 / ATCC 43961 / DSM 17024).